We begin with the raw amino-acid sequence, 581 residues long: Major facilitator superfamily multidrug transporter NAG4 (581 aa).

The span at 1–14 (MSHATDSTLDNASV) shows a compositional bias: polar residues. The disordered stretch occupies residues 1–43 (MSHATDSTLDNASVDSEKVRDFGDDLQNHPVQPTRSILSKIRS). An N-linked (GlcNAc...) asparagine glycan is attached at asparagine 11. Residues 15–27 (DSEKVRDFGDDLQ) show a composition bias toward basic and acidic residues. Asparagine 125 carries an N-linked (GlcNAc...) asparagine glycan. The next 12 membrane-spanning stretches (helical) occupy residues 132-152 (WLYTLVLGAVCFVVALGSAIV), 169-189 (VIILASVTVFVIGFGVGPLVF), 199-219 (KPIYVVTLFIAVVFIVPCGAA), 230-250 (LIDGIAFSAPMTLIGGSLADI), 261-281 (AIFSAAPFLGPVCGPIFGGLL), 290-310 (WIYWTFLIVAGVFYAIFIAIV), 365-385 (IVFLMTIYMAICYGLLYMFFF), 403-423 (GVMFIPIGVGVIIATIAAPFF), 447-467 (LIPMMIACWFVPVGLFAFAWS), 471-491 (WVSWAGPCFSGLAAGFGFCCL), 510-530 (ALAAKTFVRSIWGACVPLFTI), and 544-564 (LMAFISLACCAIPYLFFFFGA).

Belongs to the major facilitator superfamily. DHA1 family. Polyamines/proton antiporter (TC 2.A.1.2.16) subfamily.

The protein resides in the cell membrane. Functionally, MFS transporter involved in N-acetylglucosamine (GlcNAc) uptake. Confers resistance to cycloheximide, 4-nitroquinoline-N-oxide, and 1,10-phenanthroline, and contributes to virulence. The chain is Major facilitator superfamily multidrug transporter NAG4 from Candida albicans (strain SC5314 / ATCC MYA-2876) (Yeast).